A 210-amino-acid chain; its full sequence is HTH-type transcriptional repressor FabR (210 aa).

Positions 10-70 (KTRRSLVEAA…TMVDESGLML (61 aa)) constitute an HTH tetR-type domain. Positions 33-52 (SLREVAREAGIAPTSFYRHF) form a DNA-binding region, H-T-H motif.

As to quaternary structure, homodimer.

Its subcellular location is the cytoplasm. Functionally, represses the transcription of fabB, involved in unsaturated fatty acid (UFA) biosynthesis. By controlling UFA production, FabR directly influences the physical properties of the membrane bilayer. This Salmonella arizonae (strain ATCC BAA-731 / CDC346-86 / RSK2980) protein is HTH-type transcriptional repressor FabR.